Here is a 339-residue protein sequence, read N- to C-terminus: MRMEKTTDKSLSAGDMNDEYSRGPIDDIDCLNFFERAVQDPCCEACDTEDADEELRAKLSSFNFQPDSSPCNAKCQQTLNPLCKIDEALSAESELAPSRNGSVSEANSDTNSIASTVHDPVDSKYGGMPSLRKAKTTSYFASSSSNNTTMRNPLKKCNTNINGLLVNGRSSSSSRQSIPELFSGACTKKKNNVLLKSETPNSEFSSNSLQHCNSRSFSLPRSRSRSSAIAIPTHLYGLEKYVSPGLDTLTADPEESIERFSNNRPREISSCCPNDTGDTSSSLSHSNTSSSLNFPLGTNTNQFHQPRQPVQQQQSSKPNFGAGRKKSFIEMSLASSFAG.

Disordered stretches follow at residues 1–20 (MRME…NDEY) and 94–130 (ELAP…GMPS). Residues 99 to 115 (RNGSVSEANSDTNSIAS) are compositionally biased toward polar residues. Thr159 carries the phosphothreonine modification. Phosphoserine is present on Ser177. Residues 198–213 (ETPNSEFSSNSLQHCN) are compositionally biased toward polar residues. The segment at 198 to 224 (ETPNSEFSSNSLQHCNSRSFSLPRSRS) is disordered. Residues 214–224 (SRSFSLPRSRS) are compositionally biased toward low complexity. Phosphoserine occurs at positions 224 and 227. A disordered region spans residues 258-325 (ERFSNNRPRE…SKPNFGAGRK (68 aa)). Low complexity-rich tracts occupy residues 279–293 (TSSS…SSLN) and 302–314 (QFHQ…QQQQ).

Belongs to the ISF1/MBR1 family.

Its subcellular location is the mitochondrion. Functionally, participates in mitochondrial biogenesis and stress response. In Saccharomyces cerevisiae (strain YJM789) (Baker's yeast), this protein is Mitochondrial biogenesis regulation protein 1 (MBR1).